A 32-amino-acid chain; its full sequence is Growth hormone-related protein 4 (32 aa).

A disulfide bridge links C4 with C11.

Belongs to the somatotropin/prolactin family. Glycosylated. In terms of tissue distribution, placental basal zone cells.

It is found in the secreted. The protein is Growth hormone-related protein 4 of Rattus norvegicus (Rat).